The chain runs to 439 residues: Na(+)/H(+) antiporter NhaA (439 aa).

11 helical membrane-spanning segments follow: residues 12-32 (SMNI…AIIA), 67-87 (MIEF…GLEI), 103-123 (ALPF…YMSI), 133-153 (GLAI…SLLG), 162-182 (IFLT…IALF), 186-206 (HVSY…YFIG), 214-234 (IFFL…GIHS), 314-334 (ILPL…GELV), 341-361 (VAAG…WLAI), 379-399 (GIAL…NLSF), and 412-432 (FGVL…LRIV).

It belongs to the NhaA Na(+)/H(+) (TC 2.A.33) antiporter family.

Its subcellular location is the cell inner membrane. It catalyses the reaction Na(+)(in) + 2 H(+)(out) = Na(+)(out) + 2 H(+)(in). Functionally, na(+)/H(+) antiporter that extrudes sodium in exchange for external protons. The sequence is that of Na(+)/H(+) antiporter NhaA from Bacteroides thetaiotaomicron (strain ATCC 29148 / DSM 2079 / JCM 5827 / CCUG 10774 / NCTC 10582 / VPI-5482 / E50).